A 212-amino-acid polypeptide reads, in one-letter code: Thiamine-phosphate synthase (212 aa).

4-amino-2-methyl-5-(diphosphooxymethyl)pyrimidine contacts are provided by residues 40-44 (QFREK) and Asn75. Mg(2+)-binding residues include Asp76 and Asp95. Position 113 (Ser113) interacts with 4-amino-2-methyl-5-(diphosphooxymethyl)pyrimidine. Residue 139-141 (TIS) coordinates 2-[(2R,5Z)-2-carboxy-4-methylthiazol-5(2H)-ylidene]ethyl phosphate. Lys142 is a binding site for 4-amino-2-methyl-5-(diphosphooxymethyl)pyrimidine. Residues Gly171 and 191–192 (IS) contribute to the 2-[(2R,5Z)-2-carboxy-4-methylthiazol-5(2H)-ylidene]ethyl phosphate site.

It belongs to the thiamine-phosphate synthase family. Requires Mg(2+) as cofactor.

It catalyses the reaction 2-[(2R,5Z)-2-carboxy-4-methylthiazol-5(2H)-ylidene]ethyl phosphate + 4-amino-2-methyl-5-(diphosphooxymethyl)pyrimidine + 2 H(+) = thiamine phosphate + CO2 + diphosphate. The catalysed reaction is 2-(2-carboxy-4-methylthiazol-5-yl)ethyl phosphate + 4-amino-2-methyl-5-(diphosphooxymethyl)pyrimidine + 2 H(+) = thiamine phosphate + CO2 + diphosphate. The enzyme catalyses 4-methyl-5-(2-phosphooxyethyl)-thiazole + 4-amino-2-methyl-5-(diphosphooxymethyl)pyrimidine + H(+) = thiamine phosphate + diphosphate. The protein operates within cofactor biosynthesis; thiamine diphosphate biosynthesis; thiamine phosphate from 4-amino-2-methyl-5-diphosphomethylpyrimidine and 4-methyl-5-(2-phosphoethyl)-thiazole: step 1/1. Functionally, condenses 4-methyl-5-(beta-hydroxyethyl)thiazole monophosphate (THZ-P) and 2-methyl-4-amino-5-hydroxymethyl pyrimidine pyrophosphate (HMP-PP) to form thiamine monophosphate (TMP). In Staphylococcus haemolyticus (strain JCSC1435), this protein is Thiamine-phosphate synthase.